Here is a 169-residue protein sequence, read N- to C-terminus: Small ribosomal subunit protein uS5 (169 aa).

The S5 DRBM domain maps to 15-79 (LKEQVVAINR…EAAKKNLRRI (65 aa)).

The protein belongs to the universal ribosomal protein uS5 family. Part of the 30S ribosomal subunit. Contacts proteins S4 and S8.

Functionally, with S4 and S12 plays an important role in translational accuracy. In terms of biological role, located at the back of the 30S subunit body where it stabilizes the conformation of the head with respect to the body. This chain is Small ribosomal subunit protein uS5, found in Solibacter usitatus (strain Ellin6076).